A 228-amino-acid polypeptide reads, in one-letter code: Transcription termination/antitermination protein NusG (228 aa).

It belongs to the NusG family.

In terms of biological role, participates in transcription elongation, termination and antitermination. The chain is Transcription termination/antitermination protein NusG from Mycobacterium leprae (strain TN).